The following is a 139-amino-acid chain: mRNA stability protein mug134 (139 aa).

The disordered stretch occupies residues 83 to 139 (IGKEIPSPDTIPHRVVSAGSPNKEPSLHTKRPSESSPSGASSRRESVTRHDLESNEN). Residues 124–139 (SRRESVTRHDLESNEN) are compositionally biased toward basic and acidic residues.

Belongs to the endosulfine family.

The protein resides in the nucleus. Its subcellular location is the cytoplasm. Its function is as follows. Plays an essential role in initiation of the G0 program by preventing the degradation of specific nutrient-regulated mRNAs via the 5'-3' mRNA decay pathway. The polypeptide is mRNA stability protein mug134 (mug134) (Schizosaccharomyces pombe (strain 972 / ATCC 24843) (Fission yeast)).